Consider the following 307-residue polypeptide: MVGGGVIQQILRRKLHSQSLATPVLSWFSSKKAHEDAGSSGVRALALLGAGVTGLLSFSTVASADEAEHGLESPEYPWPHDGILSSYDHASIRRGHQVYQQVCASCHSMSLISYRDLVGVAYTEEEAKAMAAEIEVVDGPNDEGEMFTRPGKLSDRFPQPYANESAARFANGGAYPPDLSLITKARHNGPNYVFALLTGYRDPPAGISIREGLHYNPYFPGGAIAMPKMLNDEAVEYEDGVPATEAQMGKDIVSFLAWAAEPEMEERKLMGFKWIFLLSLALLQAAYYRRLKWSVLKSRKLVLDVVN.

A mitochondrion-targeting transit peptide spans 1 to 64; that stretch reads MVGGGVIQQI…LLSFSTVASA (64 aa). Residues 65-270 lie on the Mitochondrial intermembrane side of the membrane; it reads DEAEHGLESP…EPEMEERKLM (206 aa). The Cytochrome c domain maps to 90–246; that stretch reads ASIRRGHQVY…YEDGVPATEA (157 aa). The heme c site is built by Cys-103, Cys-106, His-107, and Met-226. A helical membrane pass occupies residues 271–288; the sequence is GFKWIFLLSLALLQAAYY. Over 289-307 the chain is Mitochondrial matrix; the sequence is RRLKWSVLKSRKLVLDVVN.

Belongs to the cytochrome c family. Component of the ubiquinol-cytochrome c oxidoreductase (cytochrome b-c1 complex, complex III, CIII), a multisubunit enzyme composed of 10 subunits. The complex is composed of 3 respiratory subunits cytochrome b (MT-CYB), cytochrome c1 (CYC1-1 or CYC1-2) and Rieske protein (UCR1-1 or UCR1-2), 2 core protein subunits MPPalpha1 (or MPPalpha2) and MPPB, and 5 low-molecular weight protein subunits QCR7-1 (or QCR7-2), UCRQ-1 (or UCRQ-2), QCR9, UCRY and probably QCR6-1 (or QCR6-2). The complex exists as an obligatory dimer and forms supercomplexes (SCs) in the inner mitochondrial membrane with NADH-ubiquinone oxidoreductase (complex I, CI), resulting in different assemblies (supercomplexes SCI(1)III(2) and SCI(2)III(4)). Post-translationally, binds 1 heme c group covalently per subunit.

It localises to the mitochondrion inner membrane. In terms of biological role, component of the ubiquinol-cytochrome c oxidoreductase, a multisubunit transmembrane complex that is part of the mitochondrial electron transport chain which drives oxidative phosphorylation. The respiratory chain contains 3 multisubunit complexes succinate dehydrogenase (complex II, CII), ubiquinol-cytochrome c oxidoreductase (cytochrome b-c1 complex, complex III, CIII) and cytochrome c oxidase (complex IV, CIV), that cooperate to transfer electrons derived from NADH and succinate to molecular oxygen, creating an electrochemical gradient over the inner membrane that drives transmembrane transport and the ATP synthase. The cytochrome b-c1 complex catalyzes electron transfer from ubiquinol to cytochrome c, linking this redox reaction to translocation of protons across the mitochondrial inner membrane, with protons being carried across the membrane as hydrogens on the quinol. In the process called Q cycle, 2 protons are consumed from the matrix, 4 protons are released into the intermembrane space and 2 electrons are passed to cytochrome c. Cytochrome c1 is a catalytic core subunit containing a c-type heme. It transfers electrons from the [2Fe-2S] iron-sulfur cluster of the Rieske protein to cytochrome c. The sequence is that of Cytochrome c1 1, heme protein, mitochondrial (CYC1-1) from Arabidopsis thaliana (Mouse-ear cress).